The sequence spans 296 residues: Formamidopyrimidine-DNA glycosylase (296 aa).

The Schiff-base intermediate with DNA role is filled by Pro2. Glu3 serves as the catalytic Proton donor. Lys58 functions as the Proton donor; for beta-elimination activity in the catalytic mechanism. His104, Arg126, and Lys169 together coordinate DNA. The FPG-type zinc finger occupies 260–296 (SVYDRAGEACRKPGCDGTVTRIVQAGRSTFHCPRCQK). The active-site Proton donor; for delta-elimination activity is Arg286.

It belongs to the FPG family. In terms of assembly, monomer. The cofactor is Zn(2+).

The catalysed reaction is Hydrolysis of DNA containing ring-opened 7-methylguanine residues, releasing 2,6-diamino-4-hydroxy-5-(N-methyl)formamidopyrimidine.. It carries out the reaction 2'-deoxyribonucleotide-(2'-deoxyribose 5'-phosphate)-2'-deoxyribonucleotide-DNA = a 3'-end 2'-deoxyribonucleotide-(2,3-dehydro-2,3-deoxyribose 5'-phosphate)-DNA + a 5'-end 5'-phospho-2'-deoxyribonucleoside-DNA + H(+). Its function is as follows. Involved in base excision repair of DNA damaged by oxidation or by mutagenic agents. Acts as a DNA glycosylase that recognizes and removes damaged bases. Has a preference for oxidized purines, such as 7,8-dihydro-8-oxoguanine (8-oxoG). Has AP (apurinic/apyrimidinic) lyase activity and introduces nicks in the DNA strand. Cleaves the DNA backbone by beta-delta elimination to generate a single-strand break at the site of the removed base with both 3'- and 5'-phosphates. The sequence is that of Formamidopyrimidine-DNA glycosylase from Sinorhizobium fredii (strain NBRC 101917 / NGR234).